A 309-amino-acid polypeptide reads, in one-letter code: Porphobilinogen deaminase (309 aa).

Cysteine 241 is modified (S-(dipyrrolylmethanemethyl)cysteine).

This sequence belongs to the HMBS family. In terms of assembly, monomer. Requires dipyrromethane as cofactor.

The catalysed reaction is 4 porphobilinogen + H2O = hydroxymethylbilane + 4 NH4(+). The protein operates within porphyrin-containing compound metabolism; protoporphyrin-IX biosynthesis; coproporphyrinogen-III from 5-aminolevulinate: step 2/4. Tetrapolymerization of the monopyrrole PBG into the hydroxymethylbilane pre-uroporphyrinogen in several discrete steps. In Bacillus thuringiensis subsp. konkukian (strain 97-27), this protein is Porphobilinogen deaminase.